The following is a 259-amino-acid chain: Protein TILLER ANGLE CONTROL 1 (259 aa).

The IGT motif motif lies at 56–62; it reads GILAIGT. Disordered regions lie at residues 96 to 123, 206 to 226, and 239 to 259; these read EEKA…AKMH, SCME…PLKA, and GKKI…PVTA. The segment covering 109–119 has biased composition (low complexity); it reads APSEPASALEP.

The protein belongs to the TAC family. Expressed in the basal part of seedlings.

In terms of biological role, involved in the regulation of tiller growth angle. Promotes horizontal shoot growth. TAC1 and LAZY1 play opposite functions in the regulation of tiller growth angle. The sequence is that of Protein TILLER ANGLE CONTROL 1 from Oryza sativa subsp. indica (Rice).